A 61-amino-acid chain; its full sequence is U-scoloptoxin(14)-Sm1a (61 aa).

The N-terminal stretch at 1–24 (MNPKLCMLLLVCLMAFYVIETVQA) is a signal peptide.

The protein belongs to the scoloptoxin-14 family. Post-translationally, contains 4 disulfide bonds. As to expression, expressed by the venom gland.

Its subcellular location is the secreted. This Scolopendra morsitans (Tanzanian blue ringleg centipede) protein is U-scoloptoxin(14)-Sm1a.